We begin with the raw amino-acid sequence, 907 residues long: Interference hedgehog (907 aa).

The signal sequence occupies residues 1 to 23 (MSLTRRFSLTLLLLLPLLTSLLA). Residues 24-709 (AIPVLQANLS…SHNETFNMNP (686 aa)) lie on the Extracellular side of the membrane. Ig-like C2-type domains follow at residues 42-149 (PGVR…ASIS), 152-233 (GADT…VRLA), 252-340 (PALL…FIEL), and 346-433 (PRIL…LQVN). Cystine bridges form between Cys65–Cys127, Cys173–Cys221, and Cys276–Cys324. Asn101, Asn203, Asn300, and Asn355 each carry an N-linked (GlcNAc...) asparagine glycan. Cys367 and Cys415 form a disulfide bridge. Residues 427–474 (GTLLQVNPKQLPDGEGTGMDSGRSSARPTHSRKQKQQTQMVPPSAPNV) form a disordered region. Residues 462–474 (QQTQMVPPSAPNV) show a composition bias toward polar residues. Fibronectin type-III domains follow at residues 468-578 (PPSA…LQRG) and 586-681 (VPEL…TQRP). An N-linked (GlcNAc...) asparagine glycan is attached at Asn473. The heparin site is built by Arg504, Lys511, and Lys513. Residues Asn537 and Asn548 are each glycosylated (N-linked (GlcNAc...) asparagine). Arg552 serves as a coordination point for heparin. A glycan (N-linked (GlcNAc...) asparagine) is linked at Asn568. Residues 676–688 (GRTQRPRASSTPQ) are compositionally biased toward polar residues. The interval 676 to 701 (GRTQRPRASSTPQPVLHAVDTTTPSH) is disordered. Asn702 is a glycosylation site (N-linked (GlcNAc...) asparagine). The chain crosses the membrane as a helical span at residues 710–730 (MLTGTIGGGALLVLLVISACL). At 731–907 (CLCRRRSSRG…SSGSLNSVGV (177 aa)) the chain is on the cytoplasmic side. Disordered regions lie at residues 780–805 (AQQQ…QDND) and 829–881 (MSSS…NKPG). Composition is skewed to low complexity over residues 781–794 (QQQQ…LQQQ) and 853–863 (NNNNLNQPGDG). The segment covering 865–878 (LANSADSPRLQASN) has biased composition (polar residues).

It belongs to the immunoglobulin superfamily. IHOG family. Homodimer. Heterotetramer; 2 iHog chains bind 2 hh chains when facilitated by heparin, heparin is required to promote high-affinity interactions between hh and iHog.

It localises to the membrane. Its function is as follows. Mediates response to the active Hedgehog (Hh) protein signal in embryos, functioning upstream or at the level of patched (ptc). This chain is Interference hedgehog, found in Drosophila virilis (Fruit fly).